Here is a 430-residue protein sequence, read N- to C-terminus: Divergent protein kinase domain 2A (430 aa).

An N-terminal signal peptide occupies residues 1–35; the sequence is MWRLVPLKLGRLSRALKLAALGSLLVLMLLHSPSL.

The protein belongs to the DIPK family. As to expression, expressed in heart, brain, liver, spleen, kidney, lung, thymus, testis, ovary and muscle.

The protein localises to the golgi apparatus. It localises to the cytoplasmic vesicle. The protein resides in the COPI-coated vesicle. Its subcellular location is the secreted. In terms of biological role, may play a role in cardiomyocyte proliferation through paracrine signaling and activation of the PI3-kinase signaling cascade. In Mus musculus (Mouse), this protein is Divergent protein kinase domain 2A (Dipk2a).